Reading from the N-terminus, the 703-residue chain is Calpain-8 (703 aa).

Residues 45–344 form the Calpain catalytic domain; the sequence is LFKDPEFPAC…FSRLEICNLS (300 aa). Active-site residues include C105, H262, and N286. Residues 356-379 form a domain III region; sequence WNLVLFNGHWTRGSTAGGCQNYPA. 3 consecutive EF-hand domains span residues 575 to 610, 618 to 640, and 670 to 703; these read FNINTCREMISLLDSNGTGTLGAVEFKTLWLKIQKY, DYNHSGTIDAHEMRTALRKAGFT, and IRLETLFKLFSLLDEDKDGMVQLSLAEWLCCVLV. Ca(2+)-binding residues include D588, N590, T592, T594, E599, D618, N620, S622, T624, and E629.

It belongs to the peptidase C2 family. Monomer and homooligomer. Interacts with COPS1/GPS1, COPB1, EYA2, NME2, NME4 and TOMM70. It depends on Ca(2+) as a cofactor. Post-translationally, undergoes autolytic cleavage between Ala-5 and Ala-6 which gives rise to fragments extending from Ala-6 to the C-terminus, Ala-6 to the EF-hand 2 domain and from Ala-6 to the beginning of domain III. Stomach.

The protein resides in the cytoplasm. It localises to the golgi apparatus. The enzyme catalyses Broad endopeptidase specificity.. Its function is as follows. Calcium-regulated non-lysosomal thiol-protease. Involved in membrane trafficking in the gastric surface mucus cells (pit cells) and may involve the membrane trafficking of mucus cells via interactions with coat protein. Proteolytically cleaves the beta-subunit of coatomer complex. The protein is Calpain-8 (CAPN8) of Homo sapiens (Human).